We begin with the raw amino-acid sequence, 563 residues long: Pyruvate decarboxylase (563 aa).

Pyruvate contacts are provided by aspartate 28 and histidine 115. Thiamine diphosphate-binding positions include threonine 390 and glycine 413–isoleucine 415. Position 444 (aspartate 444) interacts with Mg(2+). Residues glycine 445–serine 446 and asparagine 471–isoleucine 476 contribute to the thiamine diphosphate site. Mg(2+) is bound by residues asparagine 471 and glycine 473. Glutamate 477 is a binding site for pyruvate.

This sequence belongs to the TPP enzyme family. As to quaternary structure, homotetramer. Mg(2+) serves as cofactor. Thiamine diphosphate is required as a cofactor.

It catalyses the reaction a 2-oxocarboxylate + H(+) = an aldehyde + CO2. It carries out the reaction pyruvate + H(+) = acetaldehyde + CO2. The polypeptide is Pyruvate decarboxylase (PDC1) (Kluyveromyces lactis (strain ATCC 8585 / CBS 2359 / DSM 70799 / NBRC 1267 / NRRL Y-1140 / WM37) (Yeast)).